A 179-amino-acid polypeptide reads, in one-letter code: Large ribosomal subunit protein uL6 (179 aa).

Belongs to the universal ribosomal protein uL6 family. Part of the 50S ribosomal subunit.

In terms of biological role, this protein binds to the 23S rRNA, and is important in its secondary structure. It is located near the subunit interface in the base of the L7/L12 stalk, and near the tRNA binding site of the peptidyltransferase center. This chain is Large ribosomal subunit protein uL6, found in Alkaliphilus oremlandii (strain OhILAs) (Clostridium oremlandii (strain OhILAs)).